We begin with the raw amino-acid sequence, 324 residues long: Fibronectin type III domain-containing protein 8 (324 aa).

The region spanning 179 to 280 (PDTPFIFEHT…KPYKFATLAT (102 aa)) is the Fibronectin type-III domain.

This chain is Fibronectin type III domain-containing protein 8 (FNDC8), found in Homo sapiens (Human).